We begin with the raw amino-acid sequence, 257 residues long: MTQHSRDTPQFYLTAPSPCPYLPGRHERKVFTHLVGNKAGELNDLLTHGGFRRSQSIAYRPACDQCRSCVSVRVIANEFRASRNQRKILARNADIVGEQRNPVPTSEQYSVFRAYLDQRHRHGGMADMTVLDYAMMVEDSHVETRIIEYRKRTLDTGITGRGGDLVAAALTDVLNDGLSMVYSFYEPGEQNRSLGTFMILDHIARARRLGLPYVYLGYWIEGSKKMDYKGRYLPQQRLAPSGWIRVDASGEYPEPQD.

Belongs to the R-transferase family. Bpt subfamily.

The protein resides in the cytoplasm. It catalyses the reaction N-terminal L-glutamyl-[protein] + L-leucyl-tRNA(Leu) = N-terminal L-leucyl-L-glutamyl-[protein] + tRNA(Leu) + H(+). It carries out the reaction N-terminal L-aspartyl-[protein] + L-leucyl-tRNA(Leu) = N-terminal L-leucyl-L-aspartyl-[protein] + tRNA(Leu) + H(+). Its function is as follows. Functions in the N-end rule pathway of protein degradation where it conjugates Leu from its aminoacyl-tRNA to the N-termini of proteins containing an N-terminal aspartate or glutamate. This chain is Aspartate/glutamate leucyltransferase, found in Rhodopseudomonas palustris (strain BisB5).